The chain runs to 616 residues: Chaperone protein HscA (616 aa).

This sequence belongs to the heat shock protein 70 family.

Its function is as follows. Chaperone involved in the maturation of iron-sulfur cluster-containing proteins. Has a low intrinsic ATPase activity which is markedly stimulated by HscB. Involved in the maturation of IscU. The polypeptide is Chaperone protein HscA (Salmonella paratyphi B (strain ATCC BAA-1250 / SPB7)).